The primary structure comprises 417 residues: Signal recognition particle receptor FtsY (417 aa).

GTP is bound by residues 228–235 (GINGTGKT), 310–314 (DTAGR), and 368–371 (TKID).

The protein belongs to the GTP-binding SRP family. FtsY subfamily. As to quaternary structure, part of the signal recognition particle protein translocation system, which is composed of SRP and FtsY.

Its subcellular location is the cell membrane. It is found in the cytoplasm. It carries out the reaction GTP + H2O = GDP + phosphate + H(+). Involved in targeting and insertion of nascent membrane proteins into the cytoplasmic membrane. Acts as a receptor for the complex formed by the signal recognition particle (SRP) and the ribosome-nascent chain (RNC). This Methanosarcina acetivorans (strain ATCC 35395 / DSM 2834 / JCM 12185 / C2A) protein is Signal recognition particle receptor FtsY.